The chain runs to 226 residues: ATP synthase F(0) complex subunit a (226 aa).

The next 6 helical transmembrane spans lie at 6–26, 68–88, 97–117, 138–158, 164–184, and 189–209; these read FASF…IVLF, WALM…LGLL, QLSM…ITGF, IPML…ALAV, ITAG…LMSI, and ALIT…VAMI.

It belongs to the ATPase A chain family. In terms of assembly, component of the ATP synthase complex composed at least of ATP5F1A/subunit alpha, ATP5F1B/subunit beta, ATP5MC1/subunit c (homooctomer), MT-ATP6/subunit a, MT-ATP8/subunit 8, ATP5ME/subunit e, ATP5MF/subunit f, ATP5MG/subunit g, ATP5MK/subunit k, ATP5MJ/subunit j, ATP5F1C/subunit gamma, ATP5F1D/subunit delta, ATP5F1E/subunit epsilon, ATP5PF/subunit F6, ATP5PB/subunit b, ATP5PD/subunit d, ATP5PO/subunit OSCP. ATP synthase complex consists of a soluble F(1) head domain (subunits alpha(3) and beta(3)) - the catalytic core - and a membrane F(0) domain - the membrane proton channel (subunits c, a, 8, e, f, g, k and j). These two domains are linked by a central stalk (subunits gamma, delta, and epsilon) rotating inside the F1 region and a stationary peripheral stalk (subunits F6, b, d, and OSCP). Interacts with DNAJC30; interaction is direct.

It localises to the mitochondrion inner membrane. The enzyme catalyses H(+)(in) = H(+)(out). Subunit a, of the mitochondrial membrane ATP synthase complex (F(1)F(0) ATP synthase or Complex V) that produces ATP from ADP in the presence of a proton gradient across the membrane which is generated by electron transport complexes of the respiratory chain. ATP synthase complex consist of a soluble F(1) head domain - the catalytic core - and a membrane F(1) domain - the membrane proton channel. These two domains are linked by a central stalk rotating inside the F(1) region and a stationary peripheral stalk. During catalysis, ATP synthesis in the catalytic domain of F(1) is coupled via a rotary mechanism of the central stalk subunits to proton translocation. With the subunit c (ATP5MC1), forms the proton-conducting channel in the F(0) domain, that contains two crucial half-channels (inlet and outlet) that facilitate proton movement from the mitochondrial intermembrane space (IMS) into the matrix. Protons are taken up via the inlet half-channel and released through the outlet half-channel, following a Grotthuss mechanism. This is ATP synthase F(0) complex subunit a from Bos indicus (Zebu).